A 420-amino-acid polypeptide reads, in one-letter code: Multifunctional CCA protein (420 aa).

Residues Gly8 and Arg11 each contribute to the ATP site. CTP is bound by residues Gly8 and Arg11. Residues Asp21 and Asp23 each contribute to the Mg(2+) site. Residues Arg91, Arg137, and Arg140 each coordinate ATP. CTP contacts are provided by Arg91, Arg137, and Arg140. The HD domain maps to 228-334 (TFVHTMLVLQ…LKLFNRLDVW (107 aa)).

It belongs to the tRNA nucleotidyltransferase/poly(A) polymerase family. Bacterial CCA-adding enzyme type 1 subfamily. Monomer. Can also form homodimers and oligomers. Mg(2+) serves as cofactor. The cofactor is Ni(2+).

It carries out the reaction a tRNA precursor + 2 CTP + ATP = a tRNA with a 3' CCA end + 3 diphosphate. The catalysed reaction is a tRNA with a 3' CCA end + 2 CTP + ATP = a tRNA with a 3' CCACCA end + 3 diphosphate. In terms of biological role, catalyzes the addition and repair of the essential 3'-terminal CCA sequence in tRNAs without using a nucleic acid template. Adds these three nucleotides in the order of C, C, and A to the tRNA nucleotide-73, using CTP and ATP as substrates and producing inorganic pyrophosphate. tRNA 3'-terminal CCA addition is required both for tRNA processing and repair. Also involved in tRNA surveillance by mediating tandem CCA addition to generate a CCACCA at the 3' terminus of unstable tRNAs. While stable tRNAs receive only 3'-terminal CCA, unstable tRNAs are marked with CCACCA and rapidly degraded. This Pasteurella multocida (strain Pm70) protein is Multifunctional CCA protein.